The following is a 596-amino-acid chain: Elongation factor 4 (596 aa).

The 183-residue stretch at 2–184 (SHIRNFSIIA…RLVHTIPAPE (183 aa)) folds into the tr-type G domain. Residues 14-19 (DHGKST) and 131-134 (NKMD) contribute to the GTP site.

Belongs to the TRAFAC class translation factor GTPase superfamily. Classic translation factor GTPase family. LepA subfamily.

The protein localises to the cell inner membrane. The catalysed reaction is GTP + H2O = GDP + phosphate + H(+). Required for accurate and efficient protein synthesis under certain stress conditions. May act as a fidelity factor of the translation reaction, by catalyzing a one-codon backward translocation of tRNAs on improperly translocated ribosomes. Back-translocation proceeds from a post-translocation (POST) complex to a pre-translocation (PRE) complex, thus giving elongation factor G a second chance to translocate the tRNAs correctly. Binds to ribosomes in a GTP-dependent manner. This is Elongation factor 4 from Pseudomonas putida (strain GB-1).